The chain runs to 485 residues: Glutamyl-tRNA(Gln) amidotransferase subunit A (485 aa).

Residues Lys-76 and Ser-151 each act as charge relay system in the active site. The Acyl-ester intermediate role is filled by Ser-175.

It belongs to the amidase family. GatA subfamily. As to quaternary structure, heterotrimer of A, B and C subunits.

The enzyme catalyses L-glutamyl-tRNA(Gln) + L-glutamine + ATP + H2O = L-glutaminyl-tRNA(Gln) + L-glutamate + ADP + phosphate + H(+). Functionally, allows the formation of correctly charged Gln-tRNA(Gln) through the transamidation of misacylated Glu-tRNA(Gln) in organisms which lack glutaminyl-tRNA synthetase. The reaction takes place in the presence of glutamine and ATP through an activated gamma-phospho-Glu-tRNA(Gln). This is Glutamyl-tRNA(Gln) amidotransferase subunit A from Methylococcus capsulatus (strain ATCC 33009 / NCIMB 11132 / Bath).